Reading from the N-terminus, the 67-residue chain is SPbeta prophage-derived uncharacterized protein YopZ (67 aa).

The stretch at 1–40 (MTSEMQLQAQIDVIEKENKELRRRNEELGQTVECQNKQIV) forms a coiled coil. Residues 44–66 (WRLLFFASSWIVYGIVSAIKYLW) traverse the membrane as a helical segment.

The protein localises to the cell membrane. This is SPbeta prophage-derived uncharacterized protein YopZ (yopZ) from Bacillus subtilis (strain 168).